A 488-amino-acid polypeptide reads, in one-letter code: (Z)-2-((N-methylformamido)methylene)-5-hydroxybutyrolactone dehydrogenase (488 aa).

Residues 149–150 (WN) and 226–227 (GG) each bind NAD(+). The Proton acceptor role is filled by E248. L249 serves as a coordination point for NAD(+). C282 acts as the Nucleophile in catalysis. E380 provides a ligand contact to NAD(+).

This sequence belongs to the aldehyde dehydrogenase family. Homodimer.

It carries out the reaction (Z)-2-((N-methylformamido)methylene)-5-hydroxybutanolactone + NAD(+) + H2O = (E)-2-((N-methylformamido) methylene)succinate + NADH + 3 H(+). Functionally, involved in the degradation of the pyridine ring of trigonelline (TG; N-methylnicotinate) into succinate and methylamine as carbon and nitrogen sources, respectively. Catalyzes the NAD(+)-dependent oxidation of (Z)-2-((N-methylformamido)methylene)-5-hydroxybutyrolactone (MFMB) to yield (E)-2-((N-methylformamido)methylene)succinate (MFMS). The protein is (Z)-2-((N-methylformamido)methylene)-5-hydroxybutyrolactone dehydrogenase of Acinetobacter baylyi (strain ATCC 33305 / BD413 / ADP1).